A 182-amino-acid chain; its full sequence is MVSRNIESTSKVPTFHVIREVYDSSNAHERFEAELDKALEAKLDFIVIEPPRLGDETGRWIWVGNCLHKTAVATGVVSLVASLLWRDRPIIAAPACALSIFCTGLYTVSWNYDPCCQYQVENNDTVLEKLPLTDVSSPVILGYSPNSKTKYLHRSVSLLSAALCAWQIWRSYNRFVHSAGSG.

At Ser25 the chain carries Phosphoserine. 2 helical membrane-spanning segments follow: residues 70–89 (TAVATGVVSLVASLLWRDRP) and 91–108 (IAAPACALSIFCTGLYTV).

Belongs to the TMEM11 family.

It localises to the mitochondrion inner membrane. Plays a role in mitochondrial morphogenesis. The polypeptide is Transmembrane protein 11 homolog, mitochondrial (Pmi) (Drosophila melanogaster (Fruit fly)).